The chain runs to 342 residues: RNA 3'-terminal phosphate cyclase (342 aa).

Belongs to the RNA 3'-terminal cyclase family. Type 1 subfamily.

The protein localises to the cytoplasm. It carries out the reaction a 3'-end 3'-phospho-ribonucleotide-RNA + GTP = a 3'-end 2',3'-cyclophospho-ribonucleotide-RNA + GMP + diphosphate. Inhibited by GMP. Catalyzes the GTP-dependent conversion of 3'-phosphate to a 2',3'-cyclic phosphodiester at the end of RNA. The biological role of this enzyme is unknown but it is likely to function in some aspects of cellular RNA processing. The protein is RNA 3'-terminal phosphate cyclase of Pyrococcus furiosus (strain ATCC 43587 / DSM 3638 / JCM 8422 / Vc1).